A 137-amino-acid chain; its full sequence is Crustacean hyperglycemic hormones (137 aa).

Residues 1–28 (MVSFRTMWSLVVVVVVVAASLGSSGVHG) form the signal peptide. At Gln-64 the chain carries Pyrrolidone carboxylic acid. Phe-66 carries the D-phenylalanine; in form CHH-II modification. Intrachain disulfides connect Cys-70–Cys-106, Cys-86–Cys-102, and Cys-89–Cys-115. Valine amide is present on Val-135.

This sequence belongs to the arthropod CHH/MIH/GIH/VIH hormone family. In terms of tissue distribution, produced by the medulla terminalis X-organ in the eyestalks and transported to the sinus gland where they are stored and released.

The protein localises to the secreted. Hormone found in the sinus gland of isopods and decapods which controls the blood sugar level. Has a secretagogue action over the amylase released from the midgut gland. May act as a stress hormone and may be involved in the control of molting and reproduction. This chain is Crustacean hyperglycemic hormones, found in Procambarus clarkii (Red swamp crayfish).